The sequence spans 151 residues: uncharacterized protein (151 aa).

The next 3 membrane-spanning stretches (helical) occupy residues 12 to 32 (LAYFIDGIIVSVPSYIILFII), 59 to 79 (LAFLPTMLIMIVISVLYYGLL), and 114 to 134 (YFAYILSGIIFYIGFIMIAFG).

It localises to the cell membrane. This is an uncharacterized protein from Bacillus subtilis (strain 168).